A 131-amino-acid polypeptide reads, in one-letter code: Large-conductance mechanosensitive channel (131 aa).

Transmembrane regions (helical) follow at residues 8–28 (FAVR…GAFG), 30–50 (IVSS…LGGI), and 67–87 (GAFL…FLFV).

Belongs to the MscL family. As to quaternary structure, homopentamer.

It localises to the cell membrane. Channel that opens in response to stretch forces in the membrane lipid bilayer. May participate in the regulation of osmotic pressure changes within the cell. This chain is Large-conductance mechanosensitive channel, found in Anoxybacillus flavithermus (strain DSM 21510 / WK1).